The chain runs to 231 residues: MGQQFSDQTQLVLNKLPEKVAKHVTLVRESGSLTYEEFLGRVAELNDMGTAKVASGQEKHLLFEVQPGSDSSAFWKVVVRVVCTKINKSTGIVEASRIMNLYQFIQLYKDITSQASGVLAQSSTSEDPDENSSSVTSCQASLWMGRVKQLTDEEECCICMDGRADLILPCAHSFCQKCIDKWSDRHRNCPICRLQMTGANESWVVSDAPTEDDMANYILNMADEAGQPHRP.

Residue Gly2 is the site of N-myristoyl glycine attachment. The segment at 156-193 (CCICMDGRADLILPCAHSFCQKCIDKWSDRHRNCPICR) adopts an RING-type zinc-finger fold.

It localises to the membrane. Functionally, may be involved in spermatogenesis. This is RING finger protein 141 (RNF141) from Canis lupus familiaris (Dog).